Consider the following 354-residue polypeptide: Alkanal monooxygenase alpha chain (354 aa).

The protein belongs to the bacterial luciferase oxidoreductase family. Heterodimer of an alpha and a beta chain.

The catalysed reaction is a long-chain fatty aldehyde + FMNH2 + O2 = a long-chain fatty acid + hnu + FMN + H2O + 2 H(+). Light-emitting reaction in luminous bacteria. This Photobacterium leiognathi protein is Alkanal monooxygenase alpha chain (luxA).